Reading from the N-terminus, the 342-residue chain is Protein-glutamate methylesterase/protein-glutamine glutaminase 4 (342 aa).

Positions 2 to 119 (NIGIVNDLPL…GGSADPSQPL (118 aa)) constitute a Response regulatory domain. At Asp-53 the chain carries 4-aspartylphosphate. Positions 144 to 337 (PAPQGALPPL…DQLISLVQRN (194 aa)) constitute a CheB-type methylesterase domain. Active-site residues include Ser-159, His-186, and Asp-279.

This sequence belongs to the CheB family. In terms of processing, phosphorylated by CheA. Phosphorylation of the N-terminal regulatory domain activates the methylesterase activity.

The protein resides in the cytoplasm. It carries out the reaction [protein]-L-glutamate 5-O-methyl ester + H2O = L-glutamyl-[protein] + methanol + H(+). The enzyme catalyses L-glutaminyl-[protein] + H2O = L-glutamyl-[protein] + NH4(+). Functionally, involved in chemotaxis. Part of a chemotaxis signal transduction system that modulates chemotaxis in response to various stimuli. Catalyzes the demethylation of specific methylglutamate residues introduced into the chemoreceptors (methyl-accepting chemotaxis proteins or MCP) by CheR. Also mediates the irreversible deamidation of specific glutamine residues to glutamic acid. In Burkholderia thailandensis (strain ATCC 700388 / DSM 13276 / CCUG 48851 / CIP 106301 / E264), this protein is Protein-glutamate methylesterase/protein-glutamine glutaminase 4.